The following is a 218-amino-acid chain: Claudin-5 (218 aa).

Residues 1 to 7 (MGSAALE) lie on the Cytoplasmic side of the membrane. Residues 8–28 (ILGLVLCLVGWVGLILACGLP) traverse the membrane as a helical segment. Residues 29 to 81 (MWQVTAFLDHNIVTAQTTWKGLWMSCVVQSTGHMQCKVYESVLALSAEVQAAR) lie on the Extracellular side of the membrane. A helical transmembrane segment spans residues 82–102 (ALTVGAVLLALVALFVTLTGA). Over 103-123 (QCTTCVAPGPVKARVALTGGA) the chain is Cytoplasmic. Residues 124 to 144 (LYAVCGLLALVPLCWFANIVV) traverse the membrane as a helical segment. The Extracellular portion of the chain corresponds to 145 to 160 (REFYDPTVPVSQKYEL). Residues 161-181 (GAALYIGWAASALLMCGGGLV) form a helical membrane-spanning segment. Topologically, residues 182-218 (CCGAWVCTGRPEFSFPVKYSAPRRPTANGDYDKKNYV) are cytoplasmic. The tract at residues 217–218 (YV) is interactions with TJP1, TJP2 and TJP3.

It belongs to the claudin family. As to quaternary structure, interacts with MPDZ. Directly interacts with TJP1/ZO-1, TJP2/ZO-2 and TJP3/ZO-3. As to expression, widely expressed with highest levels in the lung.

The protein localises to the cell junction. It localises to the tight junction. Its subcellular location is the cell membrane. In terms of biological role, plays a major role in tight junction-specific obliteration of the intercellular space, through calcium-independent cell-adhesion activity. The protein is Claudin-5 (Cldn5) of Mus musculus (Mouse).